The chain runs to 275 residues: NH(3)-dependent NAD(+) synthetase (275 aa).

46–53 (GISGGQDS) serves as a coordination point for ATP. D52 provides a ligand contact to Mg(2+). R140 is a deamido-NAD(+) binding site. ATP is bound at residue T160. E165 serves as a coordination point for Mg(2+). K173 and D180 together coordinate deamido-NAD(+). 2 residues coordinate ATP: K189 and T211. Residue 260 to 261 (HK) coordinates deamido-NAD(+).

The protein belongs to the NAD synthetase family. As to quaternary structure, homodimer.

It carries out the reaction deamido-NAD(+) + NH4(+) + ATP = AMP + diphosphate + NAD(+) + H(+). It participates in cofactor biosynthesis; NAD(+) biosynthesis; NAD(+) from deamido-NAD(+) (ammonia route): step 1/1. Functionally, catalyzes the ATP-dependent amidation of deamido-NAD to form NAD. Uses ammonia as a nitrogen source. In Enterobacter sp. (strain 638), this protein is NH(3)-dependent NAD(+) synthetase.